The chain runs to 330 residues: MKISVLGAGSWGTAIAIHLNRLGHQITLWLRDKNQFEEIVSTRHNKKYLDVDIPQEISITTDLKEAVTNSEIVVIAVPSHAVREISEKLKEVADKNFIVVNLAKGIETSTLKRMSEVIKEYLSNDVVVLSGPSHAEEVVRQIPTACVLASLNVKACEVVQDAFMDENFRLYINKDVVGVELGGSLKNIIALGAGISDGLGFGDNTKAALMTRGLAEITRLGVALGSDPLTFLGLAGVGDLIVTCTSMLSRNRRAGILIGKGKSLEEALKEIGMVVEGVNTTKSAYRLSQIHKIEMPITKEIYSILFEGKNPYEAVYSLMTRDKKHELHGI.

NADPH contacts are provided by Ser10, Trp11, Arg31, and Lys104. Positions 104, 131, and 133 each coordinate sn-glycerol 3-phosphate. An NADPH-binding site is contributed by Ala135. Sn-glycerol 3-phosphate contacts are provided by Lys186, Asp239, Ser249, Arg250, and Asn251. The active-site Proton acceptor is Lys186. Arg250 contributes to the NADPH binding site. Residues Val274 and Glu276 each coordinate NADPH.

It belongs to the NAD-dependent glycerol-3-phosphate dehydrogenase family.

The protein resides in the cytoplasm. It carries out the reaction sn-glycerol 3-phosphate + NAD(+) = dihydroxyacetone phosphate + NADH + H(+). The enzyme catalyses sn-glycerol 3-phosphate + NADP(+) = dihydroxyacetone phosphate + NADPH + H(+). The protein operates within membrane lipid metabolism; glycerophospholipid metabolism. Functionally, catalyzes the reduction of the glycolytic intermediate dihydroxyacetone phosphate (DHAP) to sn-glycerol 3-phosphate (G3P), the key precursor for phospholipid synthesis. This Thermoanaerobacter sp. (strain X514) protein is Glycerol-3-phosphate dehydrogenase [NAD(P)+].